The following is a 182-amino-acid chain: Ribosome maturation factor RimM (182 aa).

A PRC barrel domain is found at 103–182; it reads EDEFYWRELF…RIEVDWDPGF (80 aa).

This sequence belongs to the RimM family. As to quaternary structure, binds ribosomal protein uS19.

The protein resides in the cytoplasm. In terms of biological role, an accessory protein needed during the final step in the assembly of 30S ribosomal subunit, possibly for assembly of the head region. Essential for efficient processing of 16S rRNA. May be needed both before and after RbfA during the maturation of 16S rRNA. It has affinity for free ribosomal 30S subunits but not for 70S ribosomes. The sequence is that of Ribosome maturation factor RimM from Vibrio campbellii (strain ATCC BAA-1116).